Reading from the N-terminus, the 237-residue chain is UDP-2,3-diacylglucosamine hydrolase (237 aa).

5 residues coordinate Mn(2+): D9, H11, D42, N80, and H115. Residue 80-81 (NR) coordinates substrate. 5 residues coordinate substrate: D123, S161, K165, K168, and H196. H196 and H198 together coordinate Mn(2+).

Belongs to the LpxH family. The cofactor is Mn(2+).

The protein resides in the cell inner membrane. The catalysed reaction is UDP-2-N,3-O-bis[(3R)-3-hydroxytetradecanoyl]-alpha-D-glucosamine + H2O = 2-N,3-O-bis[(3R)-3-hydroxytetradecanoyl]-alpha-D-glucosaminyl 1-phosphate + UMP + 2 H(+). It participates in glycolipid biosynthesis; lipid IV(A) biosynthesis; lipid IV(A) from (3R)-3-hydroxytetradecanoyl-[acyl-carrier-protein] and UDP-N-acetyl-alpha-D-glucosamine: step 4/6. Its function is as follows. Hydrolyzes the pyrophosphate bond of UDP-2,3-diacylglucosamine to yield 2,3-diacylglucosamine 1-phosphate (lipid X) and UMP by catalyzing the attack of water at the alpha-P atom. Involved in the biosynthesis of lipid A, a phosphorylated glycolipid that anchors the lipopolysaccharide to the outer membrane of the cell. The polypeptide is UDP-2,3-diacylglucosamine hydrolase (Haemophilus influenzae (strain PittGG)).